Consider the following 238-residue polypeptide: MKVDVIISADYITDDIVKDKVVVVIDMFRATSVITTAINNGCQKVIPYLTVEETLEEAKKYDKSEVILGGERRAVKIEGFDLSNSPLEYTEKVVKNKTVLMTTTNGTRALTKCLPGKKIIIAAMINAEAVAKKLLEFNDDIVIVNAGTNGEFSMDDYICGGYIINTMLKEKSNIELTDISKTSNMIYESNKDIINYVKEARHYSVMRSLKLDNDIKYCIKKSIVDVVPIYDGDKIIKL.

The protein belongs to the ComB family. The cofactor is Mg(2+).

It carries out the reaction (2R)-O-phospho-3-sulfolactate + H2O = (2R)-3-sulfolactate + phosphate. This is Probable 2-phosphosulfolactate phosphatase from Clostridium botulinum (strain Alaska E43 / Type E3).